Consider the following 98-residue polypeptide: Protein translation factor SUI1 homolog (98 aa).

The protein belongs to the SUI1 family.

The protein is Protein translation factor SUI1 homolog of Thermococcus gammatolerans (strain DSM 15229 / JCM 11827 / EJ3).